We begin with the raw amino-acid sequence, 716 residues long: Fusoxypene synthase (716 aa).

The segment at L4–T328 is sesterterpenoid synthase. D96 lines the Mg(2+) pocket. D96 is a binding site for substrate. A substrate region spans residues R187–N190. N231 is a binding site for substrate. The substrate stretch occupies residues S235–E239. The geranylfarnesyl diphosphate synthase stretch occupies residues W329–C711. Isopentenyl diphosphate-binding residues include K422, R425, and H454. 2 residues coordinate Mg(2+): D461 and D465. R470 lines the dimethylallyl diphosphate pocket. Position 471 (R471) interacts with isopentenyl diphosphate. 5 residues coordinate dimethylallyl diphosphate: K548, T549, Q587, N594, and K602.

The protein in the N-terminal section; belongs to the terpene synthase family. It in the C-terminal section; belongs to the FPP/GGPP synthase family.

The catalysed reaction is 4 isopentenyl diphosphate + dimethylallyl diphosphate = (2E,6E,10E,14E)-geranylfarnesyl diphosphate + 4 diphosphate. The enzyme catalyses (2E,6E,10E,14E)-geranylfarnesyl diphosphate = fusoxypene A + diphosphate. It carries out the reaction (2E,6E,10E,14E)-geranylfarnesyl diphosphate = fusoxypene B + diphosphate. It catalyses the reaction (2E,6E,10E,14E)-geranylfarnesyl diphosphate = fusoxypene C + diphosphate. The catalysed reaction is (2E,6E,10E,14E)-geranylfarnesyl diphosphate = (-)-astellatene + diphosphate. In terms of biological role, bifunctional sesterterpenoid synthase that performs both prenyl transferase and terpene cyclase activity, converting isopentenyl diphosphate and dimethylallyl diphosphate into geranylfarnesyl diphosphate (GFPP) and then converting GFPP into the enantiomeric sesterterpenes with a 5-6-7-3-5 ring system fusoxypene A, fusoxypene B, fusoxypene C and (-)-astellatene. This chain is Fusoxypene synthase, found in Fusarium oxysporum (Fusarium vascular wilt).